The chain runs to 106 residues: UPF0145 protein azo0572 (106 aa).

Belongs to the UPF0145 family.

The polypeptide is UPF0145 protein azo0572 (Azoarcus sp. (strain BH72)).